The primary structure comprises 258 residues: UPF0246 protein PM0066 (258 aa).

This sequence belongs to the UPF0246 family.

In Pasteurella multocida (strain Pm70), this protein is UPF0246 protein PM0066.